The following is a 387-amino-acid chain: G-protein coupled receptor homolog R33 (387 aa).

Over 1–33 the chain is Extracellular; that stretch reads MDVLLGTEELEDELHQLHFNYTCVPSLGLSVAR. Asn20 carries an N-linked (GlcNAc...) asparagine; by host glycan. Residues 34–61 traverse the membrane as a helical segment; the sequence is DAETAVNFLIVLVGGPMNFLVLATQMLS. At 62 to 71 the chain is on the cytoplasmic side; it reads NRSYSVSTPT. The chain crosses the membrane as a helical span at residues 72-94; the sequence is LYMTNLYLANLLTVATLPFLMLS. Topologically, residues 95-107 are extracellular; sequence NRGLVGSSPEGCK. The chain crosses the membrane as a helical span at residues 108–129; the sequence is IAALAYYATCTAGFATLMLIAI. Residues 130–150 are Cytoplasmic-facing; it reads NRYRVIHQRTRSGAGSKRQTY. A helical membrane pass occupies residues 151–169; that stretch reads AVLAVTWLASLMCASPAPL. Residues 170-204 are Extracellular-facing; the sequence is YATVMAHDSADALAFETCIIYFSYDQVKTVLATFK. The helical transmembrane segment at 205 to 224 threads the bilayer; that stretch reads ILITMIWGITPVVMMSWFYV. Topologically, residues 225–244 are cytoplasmic; the sequence is FFYRRLKLTSYRRRSQTLTF. The chain crosses the membrane as a helical span at residues 245 to 268; it reads VTTLMLSFLVVQTPFVAIMSYDSY. Residues 269 to 285 are Extracellular-facing; the sequence is GVLNWPINCDTINKRDA. Residues 286–309 form a helical membrane-spanning segment; sequence VSMLARVVPNFHCLLNPVLYAFLG. Over 310 to 387 the chain is Cytoplasmic; that stretch reads RDFNKRFILC…PPPPPPPPNC (78 aa). The disordered stretch occupies residues 368 to 387; sequence RLRALGRPPPPPPPPPPPNC. Residues 374 to 387 show a composition bias toward pro residues; it reads RPPPPPPPPPPPNC.

Belongs to the G-protein coupled receptor 1 family.

Its subcellular location is the host cell membrane. Its function is as follows. Plays an important role in vivo, in particular in the dissemination to or replication in the salivary gland. This is G-protein coupled receptor homolog R33 from Rattus.